Here is a 112-residue protein sequence, read N- to C-terminus: Toxin-like structure LSTX-D10 (112 aa).

The N-terminal stretch at 1 to 20 (MMKVLVVVALLVTLISYSSS) is a signal peptide. The propeptide occupies 21–41 (EGIDDLEADELLSLMANEQTR). 4 disulfides stabilise this stretch: C45–C60, C52–C69, C59–C84, and C71–C82.

It belongs to the neurotoxin 19 (CSTX) family. 01 subfamily. Expressed by the venom gland.

It localises to the secreted. The protein is Toxin-like structure LSTX-D10 of Lycosa singoriensis (Wolf spider).